Here is a 138-residue protein sequence, read N- to C-terminus: MRTLWIVAVLLLGVEGNLLQFNKMIKIMTKKNAIPFYSSYGCYCGWGGQGKPKDATDRCCFVHDCCYGKLTDCSPKSDIYSYSWKTGIIICGEGTECEKKICECDRAAAVCLGHNLRTYKKRYMFYPDFLCTDPSEKC.

A signal peptide spans 1 to 16 (MRTLWIVAVLLLGVEG). Cystine bridges form between C42-C131, C44-C60, C59-C111, C65-C138, C66-C104, C73-C97, and C91-C102. Ca(2+) contacts are provided by Y43, G45, and G47. H63 is a catalytic residue. Position 64 (D64) interacts with Ca(2+). D105 is an active-site residue.

It belongs to the phospholipase A2 family. Group II subfamily. D49 sub-subfamily. As to quaternary structure, homodimer. Requires Ca(2+) as cofactor. In terms of tissue distribution, expressed by the venom gland.

It is found in the secreted. The catalysed reaction is a 1,2-diacyl-sn-glycero-3-phosphocholine + H2O = a 1-acyl-sn-glycero-3-phosphocholine + a fatty acid + H(+). Functionally, snake venom phospholipase A2 (PLA2) that displays edema-inducing activities, as well as presynaptic neurotoxicity and low myotoxicity. PLA2 catalyzes the calcium-dependent hydrolysis of the 2-acyl groups in 3-sn-phosphoglycerides. This chain is Basic phospholipase A2 trimucrotoxin, found in Protobothrops mucrosquamatus (Taiwan habu).